The sequence spans 505 residues: Glycerol kinase 2 (505 aa).

T17 contacts ADP. 3 residues coordinate ATP: T17, T18, and S19. T17 contributes to the sn-glycerol 3-phosphate binding site. R21 is a binding site for ADP. R87, E88, Y139, and D249 together coordinate sn-glycerol 3-phosphate. R87, E88, Y139, D249, and Q250 together coordinate glycerol. Positions 271 and 314 each coordinate ADP. 4 residues coordinate ATP: T271, G314, Q318, and G415. The ADP site is built by G415 and N419.

It belongs to the FGGY kinase family.

It catalyses the reaction glycerol + ATP = sn-glycerol 3-phosphate + ADP + H(+). Its pathway is polyol metabolism; glycerol degradation via glycerol kinase pathway; sn-glycerol 3-phosphate from glycerol: step 1/1. With respect to regulation, inhibited by fructose 1,6-bisphosphate (FBP). In terms of biological role, key enzyme in the regulation of glycerol uptake and metabolism. Catalyzes the phosphorylation of glycerol to yield sn-glycerol 3-phosphate. This Pseudomonas aeruginosa (strain ATCC 15692 / DSM 22644 / CIP 104116 / JCM 14847 / LMG 12228 / 1C / PRS 101 / PAO1) protein is Glycerol kinase 2.